A 433-amino-acid polypeptide reads, in one-letter code: 23S rRNA (uracil(1939)-C(5))-methyltransferase RlmD (433 aa).

In terms of domain architecture, TRAM spans 1-53; that stretch reads MPVAVIESLDHEGRGVAHVDGKVVFVEGALAGEQVEYTVYRQRPSYDLAEATR. Residues Cys66, Cys72, Cys75, and Cys154 each coordinate [4Fe-4S] cluster. Positions 263, 292, 297, 313, 341, and 362 each coordinate S-adenosyl-L-methionine. Cys389 acts as the Nucleophile in catalysis.

Belongs to the class I-like SAM-binding methyltransferase superfamily. RNA M5U methyltransferase family. RlmD subfamily.

The catalysed reaction is uridine(1939) in 23S rRNA + S-adenosyl-L-methionine = 5-methyluridine(1939) in 23S rRNA + S-adenosyl-L-homocysteine + H(+). Catalyzes the formation of 5-methyl-uridine at position 1939 (m5U1939) in 23S rRNA. This is 23S rRNA (uracil(1939)-C(5))-methyltransferase RlmD from Aromatoleum aromaticum (strain DSM 19018 / LMG 30748 / EbN1) (Azoarcus sp. (strain EbN1)).